Here is a 421-residue protein sequence, read N- to C-terminus: Phosphoribosylamine--glycine ligase (421 aa).

Residues Lys-108–Met-314 enclose the ATP-grasp domain. Ile-134–Ser-195 lines the ATP pocket. Mg(2+) is bound by residues Glu-284 and Asn-286.

This sequence belongs to the GARS family. The cofactor is Mg(2+). Mn(2+) is required as a cofactor.

It carries out the reaction 5-phospho-beta-D-ribosylamine + glycine + ATP = N(1)-(5-phospho-beta-D-ribosyl)glycinamide + ADP + phosphate + H(+). Its pathway is purine metabolism; IMP biosynthesis via de novo pathway; N(1)-(5-phospho-D-ribosyl)glycinamide from 5-phospho-alpha-D-ribose 1-diphosphate: step 2/2. The sequence is that of Phosphoribosylamine--glycine ligase from Streptococcus pyogenes serotype M6 (strain ATCC BAA-946 / MGAS10394).